The primary structure comprises 90 residues: Small ribosomal subunit protein uS15 (90 aa).

It belongs to the universal ribosomal protein uS15 family. As to quaternary structure, part of the 30S ribosomal subunit. Forms a bridge to the 50S subunit in the 70S ribosome, contacting the 23S rRNA.

One of the primary rRNA binding proteins, it binds directly to 16S rRNA where it helps nucleate assembly of the platform of the 30S subunit by binding and bridging several RNA helices of the 16S rRNA. In terms of biological role, forms an intersubunit bridge (bridge B4) with the 23S rRNA of the 50S subunit in the ribosome. The sequence is that of Small ribosomal subunit protein uS15 from Campylobacter fetus subsp. fetus (strain 82-40).